The sequence spans 262 residues: Spindlin-Z (262 aa).

Residues 1–50 are disordered; sequence MKTPFGKSPGQRSRADAGHAGVSASMMKKRTSHKKHRNNVGPSKPISQPR. Residues 27–38 show a composition bias toward basic residues; sequence MKKRTSHKKHRN.

This sequence belongs to the SPIN/STSY family. Expressed in several tissues including testis.

It localises to the nucleus. Its function is as follows. May play a role in mitosis. The chain is Spindlin-Z (SPINZ) from Gallus gallus (Chicken).